The sequence spans 303 residues: CDAN1-interacting nuclease 1 (303 aa).

The protein resides in the nucleus. It localises to the cytoplasm. Its function is as follows. May play a role in erythroid cell differentiation. This chain is CDAN1-interacting nuclease 1, found in Xenopus laevis (African clawed frog).